Reading from the N-terminus, the 457-residue chain is ATP synthase subunit beta (457 aa).

Residue 147–154 (GGAGVGKT) coordinates ATP.

The protein belongs to the ATPase alpha/beta chains family. F-type ATPases have 2 components, CF(1) - the catalytic core - and CF(0) - the membrane proton channel. CF(1) has five subunits: alpha(3), beta(3), gamma(1), delta(1), epsilon(1). CF(0) has three main subunits: a(1), b(2) and c(9-12). The alpha and beta chains form an alternating ring which encloses part of the gamma chain. CF(1) is attached to CF(0) by a central stalk formed by the gamma and epsilon chains, while a peripheral stalk is formed by the delta and b chains.

It localises to the cell inner membrane. The enzyme catalyses ATP + H2O + 4 H(+)(in) = ADP + phosphate + 5 H(+)(out). In terms of biological role, produces ATP from ADP in the presence of a proton gradient across the membrane. The catalytic sites are hosted primarily by the beta subunits. In Haemophilus influenzae (strain PittEE), this protein is ATP synthase subunit beta.